Here is a 485-residue protein sequence, read N- to C-terminus: tRNA-2-methylthio-N(6)-dimethylallyladenosine synthase (485 aa).

The MTTase N-terminal domain maps to 37 to 154 (GKLYIKTHGC…LPELIRARRE (118 aa)). Cys-46, Cys-83, Cys-117, Cys-191, Cys-195, and Cys-198 together coordinate [4Fe-4S] cluster. In terms of domain architecture, Radical SAM core spans 177-416 (RADGPSAFVS…HINAHAAGIS (240 aa)). In terms of domain architecture, TRAM spans 417-480 (QRMVGSVQRV…SNSLRGRIQL (64 aa)).

It belongs to the methylthiotransferase family. MiaB subfamily. Monomer. Requires [4Fe-4S] cluster as cofactor.

The protein resides in the cytoplasm. The catalysed reaction is N(6)-dimethylallyladenosine(37) in tRNA + (sulfur carrier)-SH + AH2 + 2 S-adenosyl-L-methionine = 2-methylsulfanyl-N(6)-dimethylallyladenosine(37) in tRNA + (sulfur carrier)-H + 5'-deoxyadenosine + L-methionine + A + S-adenosyl-L-homocysteine + 2 H(+). Its function is as follows. Catalyzes the methylthiolation of N6-(dimethylallyl)adenosine (i(6)A), leading to the formation of 2-methylthio-N6-(dimethylallyl)adenosine (ms(2)i(6)A) at position 37 in tRNAs that read codons beginning with uridine. This Xanthomonas campestris pv. campestris (strain 8004) protein is tRNA-2-methylthio-N(6)-dimethylallyladenosine synthase.